Reading from the N-terminus, the 190-residue chain is Peptidyl-tRNA hydrolase (190 aa).

Tyr14 serves as a coordination point for tRNA. The active-site Proton acceptor is the His19. 3 residues coordinate tRNA: Tyr63, Asn65, and Asn112.

This sequence belongs to the PTH family. Monomer.

The protein localises to the cytoplasm. The catalysed reaction is an N-acyl-L-alpha-aminoacyl-tRNA + H2O = an N-acyl-L-amino acid + a tRNA + H(+). Its function is as follows. Hydrolyzes ribosome-free peptidyl-tRNAs (with 1 or more amino acids incorporated), which drop off the ribosome during protein synthesis, or as a result of ribosome stalling. Catalyzes the release of premature peptidyl moieties from peptidyl-tRNA molecules trapped in stalled 50S ribosomal subunits, and thus maintains levels of free tRNAs and 50S ribosomes. The sequence is that of Peptidyl-tRNA hydrolase from Kosmotoga olearia (strain ATCC BAA-1733 / DSM 21960 / TBF 19.5.1).